Here is a 168-residue protein sequence, read N- to C-terminus: DNA damage-inducible transcript 3 protein (168 aa).

The tract at residues 10–18 (LETVSSWEL) is interaction with TRIB3. Residues 10–26 (LETVSSWELEAWYEDLQ) are N-terminal. Residues Ser-14, Ser-15, Ser-30, and Ser-31 each carry the phosphoserine; by CK2 modification. Residues 30–43 (SSDENGGPYSSSLG) are compositionally biased toward polar residues. The tract at residues 30-168 (SSDENGGPYS…DRPHVNLQQV (139 aa)) is disordered. Over residues 74 to 87 (SSSQSPRSPDSSQS) the composition is skewed to low complexity. Phosphoserine; by MAPK14 occurs at positions 78 and 81. The bZIP domain occupies 98-161 (GRTRKRKQSG…EATRPGSDRP (64 aa)). The basic motif stretch occupies residues 101-129 (RKRKQSGQCPARGTGKQRMKEKEQENERK). Positions 118 to 162 (RMKEKEQENERKVAQLAEENERLKQEIERLTREVEATRPGSDRPH) are enriched in basic and acidic residues. The interval 133 to 147 (LAEENERLKQEIERL) is leucine-zipper.

This sequence belongs to the bZIP family. In terms of assembly, heterodimer. Interacts with TCF7L2/TCF4, EP300/P300, HDAC1, HDAC5 and HDAC6. Interacts with TRIB3 which blocks its association with EP300/P300. Interacts with FOXO3, CEBPB and ATF4. Ubiquitinated, leading to its degradation by the proteasome. In terms of processing, phosphorylation at serine residues by MAPK14 enhances its transcriptional activation activity while phosphorylation at serine residues by CK2 inhibits its transcriptional activation activity.

The protein localises to the cytoplasm. It localises to the nucleus. In terms of biological role, multifunctional transcription factor in ER stress response. Plays an essential role in the response to a wide variety of cell stresses and induces cell cycle arrest and apoptosis in response to ER stress. Plays a dual role both as an inhibitor of CCAAT/enhancer-binding protein (C/EBP) function and as an activator of other genes. Acts as a dominant-negative regulator of C/EBP-induced transcription: dimerizes with members of the C/EBP family, impairs their association with C/EBP binding sites in the promoter regions, and inhibits the expression of C/EBP regulated genes. Positively regulates the transcription of TRIB3, IL6, IL8, IL23, TNFRSF10B/DR5, PPP1R15A/GADD34, BBC3/PUMA, BCL2L11/BIM and ERO1L. Negatively regulates; expression of BCL2 and MYOD1, ATF4-dependent transcriptional activation of asparagine synthetase (ASNS), CEBPA-dependent transcriptional activation of hepcidin (HAMP) and CEBPB-mediated expression of peroxisome proliferator-activated receptor gamma (PPARG). Inhibits the canonical Wnt signaling pathway by binding to TCF7L2/TCF4, impairing its DNA-binding properties and repressing its transcriptional activity. Plays a regulatory role in the inflammatory response through the induction of caspase-11 (CASP4/CASP11) which induces the activation of caspase-1 (CASP1) and both these caspases increase the activation of pro-IL1B to mature IL1B which is involved in the inflammatory response. The chain is DNA damage-inducible transcript 3 protein (DDIT3) from Cricetulus griseus (Chinese hamster).